We begin with the raw amino-acid sequence, 545 residues long: G-protein coupled receptor 161 (545 aa).

Topologically, residues Met1–Glu46 are extracellular. Residues Asn21 and Asn32 are each glycosylated (N-linked (GlcNAc...) asparagine). Residues Phe47 to Thr67 traverse the membrane as a helical segment. Topologically, residues Leu68–Lys80 are cytoplasmic. The chain crosses the membrane as a helical span at residues Phe81–Val101. Over Thr102–Asn117 the chain is Extracellular. A disulfide bridge links Cys116 with Cys194. Asn117 carries N-linked (GlcNAc...) asparagine glycosylation. Residues Phe118–Ile139 form a helical membrane-spanning segment. At Asp140–Arg159 the chain is on the cytoplasmic side. Residues Ala160–Phe180 form a helical membrane-spanning segment. Residues Gly181 to Thr205 lie on the Extracellular side of the membrane. A helical membrane pass occupies residues Ile206–Phe226. Over Ile227–Leu285 the chain is Cytoplasmic. The chain crosses the membrane as a helical span at residues Ile286 to Ile306. Residues Thr307–Glu322 are Extracellular-facing. A helical membrane pass occupies residues Thr323–Trp343. Topologically, residues Asn344–Arg545 are cytoplasmic.

Belongs to the G-protein coupled receptor 1 family.

It localises to the cell projection. The protein resides in the cilium membrane. It is found in the cell membrane. Functionally, key negative regulator of Shh signaling, which promotes the processing of GLI3 into GLI3R during neural tube development. Recruited by TULP3 and the IFT-A complex to primary cilia and acts as a regulator of the PKA-dependent basal repression machinery in Shh signaling by increasing cAMP levels, leading to promote the PKA-dependent processing of GLI3 into GLI3R and repress the Shh signaling. In presence of SHH, it is removed from primary cilia and is internalized into recycling endosomes, preventing its activity and allowing activation of the Shh signaling. Its ligand is unknown. The sequence is that of G-protein coupled receptor 161 (Gpr161) from Mus musculus (Mouse).